The following is a 307-amino-acid chain: Cytidine deaminase 7 (307 aa).

CMP/dCMP-type deaminase domains follow at residues 22–155 and 185–307; these read TEPI…FTPD and SDCS…FITE. 63 to 65 contacts substrate; the sequence is NVE. Residue His-76 participates in Zn(2+) binding. Glu-78 acts as the Proton donor in catalysis. Zn(2+) contacts are provided by Cys-111 and Cys-114.

It belongs to the cytidine and deoxycytidylate deaminase family. As to quaternary structure, homodimer. It depends on Zn(2+) as a cofactor.

The enzyme catalyses cytidine + H2O + H(+) = uridine + NH4(+). It carries out the reaction 2'-deoxycytidine + H2O + H(+) = 2'-deoxyuridine + NH4(+). This enzyme scavenges exogenous and endogenous cytidine and 2'-deoxycytidine for UMP synthesis. The protein is Cytidine deaminase 7 (CDA7) of Arabidopsis thaliana (Mouse-ear cress).